A 120-amino-acid polypeptide reads, in one-letter code: Large ribosomal subunit protein bL17 (120 aa).

The protein belongs to the bacterial ribosomal protein bL17 family. Part of the 50S ribosomal subunit. Contacts protein L32.

The polypeptide is Large ribosomal subunit protein bL17 (Mesomycoplasma hyopneumoniae (strain 7448) (Mycoplasma hyopneumoniae)).